The sequence spans 455 residues: Bifunctional protein GlmU (455 aa).

The pyrophosphorylase stretch occupies residues 1 to 226 (MSLDIVILAA…AMEVQGANDR (226 aa)). UDP-N-acetyl-alpha-D-glucosamine is bound by residues 8–11 (LAAG), Lys22, Gln73, 78–79 (GT), 99–101 (YGD), Gly136, Glu151, Asn166, and Asn224. Asp101 provides a ligand contact to Mg(2+). Asn224 contributes to the Mg(2+) binding site. Residues 227–247 (RQLSELERHYQLREGRRLMAQ) form a linker region. The tract at residues 248 to 455 (GVTLRDPARF…WKRPEKIKKS (208 aa)) is N-acetyltransferase. The UDP-N-acetyl-alpha-D-glucosamine site is built by Arg330 and Lys348. Catalysis depends on His360, which acts as the Proton acceptor. Positions 363 and 374 each coordinate UDP-N-acetyl-alpha-D-glucosamine. Residues Ala377, 383–384 (NY), Ser402, Ala420, and Arg437 each bind acetyl-CoA.

The protein in the N-terminal section; belongs to the N-acetylglucosamine-1-phosphate uridyltransferase family. In the C-terminal section; belongs to the transferase hexapeptide repeat family. Homotrimer. Mg(2+) is required as a cofactor.

Its subcellular location is the cytoplasm. It catalyses the reaction alpha-D-glucosamine 1-phosphate + acetyl-CoA = N-acetyl-alpha-D-glucosamine 1-phosphate + CoA + H(+). The catalysed reaction is N-acetyl-alpha-D-glucosamine 1-phosphate + UTP + H(+) = UDP-N-acetyl-alpha-D-glucosamine + diphosphate. The protein operates within nucleotide-sugar biosynthesis; UDP-N-acetyl-alpha-D-glucosamine biosynthesis; N-acetyl-alpha-D-glucosamine 1-phosphate from alpha-D-glucosamine 6-phosphate (route II): step 2/2. It functions in the pathway nucleotide-sugar biosynthesis; UDP-N-acetyl-alpha-D-glucosamine biosynthesis; UDP-N-acetyl-alpha-D-glucosamine from N-acetyl-alpha-D-glucosamine 1-phosphate: step 1/1. Its pathway is bacterial outer membrane biogenesis; LPS lipid A biosynthesis. In terms of biological role, catalyzes the last two sequential reactions in the de novo biosynthetic pathway for UDP-N-acetylglucosamine (UDP-GlcNAc). The C-terminal domain catalyzes the transfer of acetyl group from acetyl coenzyme A to glucosamine-1-phosphate (GlcN-1-P) to produce N-acetylglucosamine-1-phosphate (GlcNAc-1-P), which is converted into UDP-GlcNAc by the transfer of uridine 5-monophosphate (from uridine 5-triphosphate), a reaction catalyzed by the N-terminal domain. This Pseudomonas putida (strain ATCC 47054 / DSM 6125 / CFBP 8728 / NCIMB 11950 / KT2440) protein is Bifunctional protein GlmU.